Consider the following 279-residue polypeptide: Beta-lactamase (279 aa).

A signal peptide spans 1–21 (MRYVRLCVISLLATLPLVVYA). Residue S66 is the Acyl-ester intermediate of the active site. An intrachain disulfide couples C73 to C119. 230–232 (KTG) serves as a coordination point for substrate.

It belongs to the class-A beta-lactamase family.

The enzyme catalyses a beta-lactam + H2O = a substituted beta-amino acid. In Klebsiella pneumoniae, this protein is Beta-lactamase.